A 293-amino-acid chain; its full sequence is Elongation factor Ts (293 aa).

The segment at 79–82 is involved in Mg(2+) ion dislocation from EF-Tu; the sequence is TDFV.

Belongs to the EF-Ts family.

It localises to the cytoplasm. Its function is as follows. Associates with the EF-Tu.GDP complex and induces the exchange of GDP to GTP. It remains bound to the aminoacyl-tRNA.EF-Tu.GTP complex up to the GTP hydrolysis stage on the ribosome. The protein is Elongation factor Ts of Macrococcus caseolyticus (strain JCSC5402) (Macrococcoides caseolyticum).